The primary structure comprises 352 residues: RNA-binding protein lark (352 aa).

2 RRM domains span residues 7-77 and 86-156; these read FKLF…AAKS and TKIF…VSTS. A CCHC-type zinc finger spans residues 168–185; the sequence is EQCYRCGRSGHWSKECPR. Disordered stretches follow at residues 187 to 228 and 254 to 352; these read YGSA…LRDR and YQTS…YAPY. Serine 198 and serine 201 each carry phosphoserine. Pro residues-rich tracts occupy residues 214 to 224 and 262 to 277; these read PYPPPPPPPPF and FPPP…PLPP. Residues 279-288 are compositionally biased toward polar residues; sequence LSGSLRSCSV. Phosphoserine occurs at positions 315 and 325. Residues 320–334 show a composition bias toward basic and acidic residues; it reads GYEDFSRDAFDERMI.

In terms of tissue distribution, expressed in the CNS and in CCAP neurons of the ventral nervous system (VNS), which control insect ecdysis.

It is found in the cytoplasm. The protein resides in the nucleus. Essential RNA-binding protein. May be required for circadian repression of eclosion. Also essential for nurse cell dumping during oogenesis, the process whereby the cytoplasmic contents of nurse cells are transferred to the oocyte late in it's development. In Drosophila melanogaster (Fruit fly), this protein is RNA-binding protein lark (lark).